A 143-amino-acid chain; its full sequence is Competence protein ComGD (143 aa).

Residues 1–10 constitute a propeptide that is removed on maturation; that stretch reads MNIKLNEEKG. An N-methylphenylalanine modification is found at F11. The chain crosses the membrane as a helical span at residues 11 to 31; sequence FTLLESLLVLSLASILLVAVF.

As to quaternary structure, the transformation pili are flexible filaments, consisting mainly of the major pilin ComGC and smaller amounts of the minor pilins, including at least ComGD, ComGF and ComGG. Interacts with ComGF. Interacts with ComGG. Post-translationally, processing of ComGD in competent cells requires ComC.

The protein resides in the cell membrane. It localises to the cell surface. Required for formation of the type IV-like pilus (T4P) that plays a role in transformation. Transformation pili are dynamically extended and retracted, perhaps thereby promoting DNA uptake and transformation. Required for transformation and DNA binding. In Bacillus subtilis (strain 168), this protein is Competence protein ComGD (comGD).